The primary structure comprises 330 residues: tRNA (cytosine(38)-C(5))-methyltransferase (330 aa).

In terms of domain architecture, SAM-dependent MTase C5-type spans 7 to 330; the sequence is LRVLELYSGI…ISLLLEPLNF (324 aa). The active site involves cysteine 81.

The protein belongs to the class I-like SAM-binding methyltransferase superfamily. C5-methyltransferase family.

The protein resides in the cytoplasm. It localises to the nucleus. It catalyses the reaction cytidine(38) in tRNA + S-adenosyl-L-methionine = 5-methylcytidine(38) in tRNA + S-adenosyl-L-homocysteine + H(+). In terms of biological role, specifically methylates cytosine 38 in the anticodon loop of tRNA(Asp). Can also methylate cytosine 38 in tRNA(Glu), albeit to a lower level, but not tRNA(Lys). Pmt1-dependent tRNA methylation is induced by nitrogen limitation and depends on the nutrient-sensing protein kinase sck2. Does not have DNA-methylation activity. The sequence is that of tRNA (cytosine(38)-C(5))-methyltransferase (pmt1) from Schizosaccharomyces pombe (strain 972 / ATCC 24843) (Fission yeast).